A 781-amino-acid polypeptide reads, in one-letter code: ATP-dependent RNA helicase rok1 (781 aa).

Disordered regions lie at residues L7–L108 and Q134–Q177. The segment covering K48 to G57 has biased composition (basic residues). Acidic residues predominate over residues S66–D75. 2 stretches are compositionally biased toward basic and acidic residues: residues T84–L108 and T139–Q173. Residues E184 to M212 carry the Q motif motif. Residues D233–R487 form the Helicase ATP-binding domain. ATP is bound at residue A246–T253. The disordered stretch occupies residues E323–K386. Acidic residues predominate over residues Q339 to S369. The span at D370–K386 shows a compositional bias: basic and acidic residues. A DEAD box motif is present at residues D434–D437. A Helicase C-terminal domain is found at A527–V689. The tract at residues R718 to D781 is disordered. Basic and acidic residues predominate over residues S736–S752.

Belongs to the DEAD box helicase family. DDX52/ROK1 subfamily. As to quaternary structure, interacts with the U3 snoRNA and is associated with the 90S and 40S pre-ribosomes.

The protein resides in the nucleus. The protein localises to the nucleolus. It carries out the reaction ATP + H2O = ADP + phosphate + H(+). Functionally, ATP-dependent RNA helicase involved in 40S ribosomal subunit biogenesis. Required for the processing and cleavage of 35S pre-rRNA at sites A0, A1, and A2, leading to mature 18S rRNA. The sequence is that of ATP-dependent RNA helicase rok1 (drh-16) from Neurospora crassa (strain ATCC 24698 / 74-OR23-1A / CBS 708.71 / DSM 1257 / FGSC 987).